The following is a 306-amino-acid chain: ClpXP adapter protein SpxH (306 aa).

Belongs to the SpxH family. As to quaternary structure, interacts with Spx.

It localises to the cytoplasm. Adapter protein required for efficient degradation of Spx by ClpXP under non-stress conditions. Interaction with Spx stabilizes Spx and exposes the C-terminus of Spx for recognition and proteolysis by ClpXP. This chain is ClpXP adapter protein SpxH, found in Halalkalibacterium halodurans (strain ATCC BAA-125 / DSM 18197 / FERM 7344 / JCM 9153 / C-125) (Bacillus halodurans).